Reading from the N-terminus, the 123-residue chain is Small ribosomal subunit protein uS12 (123 aa).

3-methylthioaspartic acid is present on Asp89.

The protein belongs to the universal ribosomal protein uS12 family. As to quaternary structure, part of the 30S ribosomal subunit. Contacts proteins S8 and S17. May interact with IF1 in the 30S initiation complex.

Functionally, with S4 and S5 plays an important role in translational accuracy. Its function is as follows. Interacts with and stabilizes bases of the 16S rRNA that are involved in tRNA selection in the A site and with the mRNA backbone. Located at the interface of the 30S and 50S subunits, it traverses the body of the 30S subunit contacting proteins on the other side and probably holding the rRNA structure together. The combined cluster of proteins S8, S12 and S17 appears to hold together the shoulder and platform of the 30S subunit. In Bradyrhizobium diazoefficiens (strain JCM 10833 / BCRC 13528 / IAM 13628 / NBRC 14792 / USDA 110), this protein is Small ribosomal subunit protein uS12.